A 694-amino-acid chain; its full sequence is Lon-like protease BrxL (694 aa).

This sequence belongs to the BrxL family.

In terms of biological role, BREX systems (bacteriophage exclusion) provide immunity against bacteriophage. Part of a type 1 BREX system which protects against dsDNA phage. This system allows phage adsorption but prevents phage DNA replication, without degradation of the phage DNA. Methylation of bacterial DNA by PglX guides self/non-self discrimination. When the brxA-brxB-brxC-pglX-pglZ-brxL genes are transformed into a susceptible E.coli strain (BW25113) they confer very high resistance to infection by bacteriophage VR7 and VpaE1, about 100-fold protection against lambda, T5 and T7 and no protection against RNA phage Qbeta, ssDNA phage M13 or dSDNA phage T4 and VR5. Glycosylated phage DNA is not susceptible to BREX. The BREX system does not confer resistance to lysogenic lambda phage, i.e. prophage that are integrated into the chromosomal DNA and then induced to form phage. Expression of this protein alone is toxic. The polypeptide is Lon-like protease BrxL (Escherichia coli O9:H4 (strain HS)).